The sequence spans 424 residues: Elongation factor Tu, mitochondrial (424 aa).

Positions 36–234 (KPHVNVGTIG…VLDTKIPLPH (199 aa)) constitute a tr-type G domain. The interval 45–52 (GHVDHGKT) is G1. GTP is bound at residue 45–52 (GHVDHGKT). Residues 86 to 90 (GITIT) are G2. A G3 region spans residues 107-110 (DCPG). GTP is bound by residues 107-111 (DCPGH) and 162-165 (NKMD). The interval 162–165 (NKMD) is G4. The segment at 199–201 (AAA) is G5.

Belongs to the TRAFAC class translation factor GTPase superfamily. Classic translation factor GTPase family. EF-Tu/EF-1A subfamily.

It is found in the mitochondrion. In terms of biological role, this protein promotes the GTP-dependent binding of aminoacyl-tRNA to the A-site of ribosomes during protein biosynthesis. This chain is Elongation factor Tu, mitochondrial (tufm), found in Dictyostelium discoideum (Social amoeba).